The primary structure comprises 162 residues: MKLDQVARSLLLKEFVSGFFLAMKYFLKPKATINYPFEMGHRGPRFRGEHALRRYPNGEERCIACKLCEAICPAQAITIEAGPRRNDGTRRTTRYDIDMVKCIYCGMCQEACPVDAIVEGPNFEFSVETREELLYDKQKLLENGDRWEREIARNIAIDAPYR.

4Fe-4S ferredoxin-type domains lie at 52-82 (LRRY…IEAG) and 93-122 (TRYD…EGPN). 8 residues coordinate [4Fe-4S] cluster: Cys62, Cys65, Cys68, Cys72, Cys102, Cys105, Cys108, and Cys112.

This sequence belongs to the complex I 23 kDa subunit family. As to quaternary structure, NDH-1 is composed of 14 different subunits. Subunits NuoA, H, J, K, L, M, N constitute the membrane sector of the complex. The cofactor is [4Fe-4S] cluster.

It is found in the cell inner membrane. The catalysed reaction is a quinone + NADH + 5 H(+)(in) = a quinol + NAD(+) + 4 H(+)(out). NDH-1 shuttles electrons from NADH, via FMN and iron-sulfur (Fe-S) centers, to quinones in the respiratory chain. The immediate electron acceptor for the enzyme in this species is believed to be ubiquinone. Couples the redox reaction to proton translocation (for every two electrons transferred, four hydrogen ions are translocated across the cytoplasmic membrane), and thus conserves the redox energy in a proton gradient. The polypeptide is NADH-quinone oxidoreductase subunit I (Methylorubrum populi (strain ATCC BAA-705 / NCIMB 13946 / BJ001) (Methylobacterium populi)).